Consider the following 269-residue polypeptide: Ribosomal RNA small subunit methyltransferase A (269 aa).

Residues I17, G42, E64, D89, and N109 each contribute to the S-adenosyl-L-methionine site.

This sequence belongs to the class I-like SAM-binding methyltransferase superfamily. rRNA adenine N(6)-methyltransferase family. RsmA subfamily.

It is found in the cytoplasm. It carries out the reaction adenosine(1518)/adenosine(1519) in 16S rRNA + 4 S-adenosyl-L-methionine = N(6)-dimethyladenosine(1518)/N(6)-dimethyladenosine(1519) in 16S rRNA + 4 S-adenosyl-L-homocysteine + 4 H(+). Its function is as follows. Specifically dimethylates two adjacent adenosines (A1518 and A1519) in the loop of a conserved hairpin near the 3'-end of 16S rRNA in the 30S particle. May play a critical role in biogenesis of 30S subunits. The protein is Ribosomal RNA small subunit methyltransferase A of Anaplasma phagocytophilum (strain HZ).